A 462-amino-acid chain; its full sequence is Argininosuccinate lyase (462 aa).

This sequence belongs to the lyase 1 family. Argininosuccinate lyase subfamily.

Its subcellular location is the cytoplasm. It catalyses the reaction 2-(N(omega)-L-arginino)succinate = fumarate + L-arginine. It functions in the pathway amino-acid biosynthesis; L-arginine biosynthesis; L-arginine from L-ornithine and carbamoyl phosphate: step 3/3. In Rippkaea orientalis (strain PCC 8801 / RF-1) (Cyanothece sp. (strain PCC 8801)), this protein is Argininosuccinate lyase.